A 417-amino-acid polypeptide reads, in one-letter code: D-galactonate dehydratase family member SeV_A0456 (417 aa).

Substrate-binding residues include Gln-43 and His-127. Tyr-158 (proton donor/acceptor) is an active-site residue. Asp-223 lines the Mg(2+) pocket. The active-site Proton donor/acceptor is His-225. Residues Glu-249 and Glu-275 each coordinate Mg(2+). Residues Glu-275, Arg-296, His-325, Asp-329, and Glu-352 each coordinate substrate.

It belongs to the mandelate racemase/muconate lactonizing enzyme family. GalD subfamily. Mg(2+) serves as cofactor.

The catalysed reaction is D-gluconate = 2-dehydro-3-deoxy-D-gluconate + H2O. In terms of biological role, has low D-gluconate dehydratase activity (in vitro), suggesting that it has no significant role in D-gluconate degradation in vivo. Has no detectable activity with a panel of 70 other acid sugars (in vitro). This chain is D-galactonate dehydratase family member SeV_A0456, found in Salmonella virchow (strain SL491).